The sequence spans 373 residues: Dual-specificity RNA methyltransferase RlmN (373 aa).

E94 acts as the Proton acceptor in catalysis. Residues 100–339 (EEDRATLCVS…VIVRKTRGDD (240 aa)) enclose the Radical SAM core domain. C107 and C344 are oxidised to a cystine. 3 residues coordinate [4Fe-4S] cluster: C114, C118, and C121. Residues 168 to 169 (GE), S200, 222 to 224 (SIH), and N301 each bind S-adenosyl-L-methionine. C344 functions as the S-methylcysteine intermediate in the catalytic mechanism.

Belongs to the radical SAM superfamily. RlmN family. It depends on [4Fe-4S] cluster as a cofactor.

It localises to the cytoplasm. The enzyme catalyses adenosine(2503) in 23S rRNA + 2 reduced [2Fe-2S]-[ferredoxin] + 2 S-adenosyl-L-methionine = 2-methyladenosine(2503) in 23S rRNA + 5'-deoxyadenosine + L-methionine + 2 oxidized [2Fe-2S]-[ferredoxin] + S-adenosyl-L-homocysteine. The catalysed reaction is adenosine(37) in tRNA + 2 reduced [2Fe-2S]-[ferredoxin] + 2 S-adenosyl-L-methionine = 2-methyladenosine(37) in tRNA + 5'-deoxyadenosine + L-methionine + 2 oxidized [2Fe-2S]-[ferredoxin] + S-adenosyl-L-homocysteine. Functionally, specifically methylates position 2 of adenine 2503 in 23S rRNA and position 2 of adenine 37 in tRNAs. m2A2503 modification seems to play a crucial role in the proofreading step occurring at the peptidyl transferase center and thus would serve to optimize ribosomal fidelity. The polypeptide is Dual-specificity RNA methyltransferase RlmN (Shewanella frigidimarina (strain NCIMB 400)).